A 426-amino-acid polypeptide reads, in one-letter code: MSNRMSQSLNEEDPQIAEAIANEERRQHEGLELIASENFVSEAVLQAAGSVFTNKYAEGYPGKRYYGGCEYADVVENLARDRAKELFGAEHANVQPHSGSSANMEAYGAILQPGDTILGLNLAHGGHLTHGHPLNFSGKTYKIVPYGVTKETETIDYDELEKLALEHHPKVIVGGGSAYPRIFDFKRMREIADKAGALFMVDMAHFAGLVAGGAHPSPVPHAHVVTTTTHKTLRGPRAGMILSKQEFAAAIDKVTFPGMQGGPLVHIIAAKAVCFKEAMEPSFKDYANQVVANAKVLAQSLADQGFRIISGGTDTHLMLIDVFAAGMLGSEAEKALGEAGITVNKNAIPFDTNPPMKPSGVRIGTPALTTRGMKEPEMRQVGIWIAESLRHRTDPDFLGRVRRQVHELCDAYPLYPERRATRLATV.

(6S)-5,6,7,8-tetrahydrofolate-binding positions include Leu-122 and 126–128 (GHL). Lys-231 is modified (N6-(pyridoxal phosphate)lysine).

It belongs to the SHMT family. In terms of assembly, homodimer. Pyridoxal 5'-phosphate is required as a cofactor.

The protein resides in the cytoplasm. It carries out the reaction (6R)-5,10-methylene-5,6,7,8-tetrahydrofolate + glycine + H2O = (6S)-5,6,7,8-tetrahydrofolate + L-serine. The protein operates within one-carbon metabolism; tetrahydrofolate interconversion. Its pathway is amino-acid biosynthesis; glycine biosynthesis; glycine from L-serine: step 1/1. In terms of biological role, catalyzes the reversible interconversion of serine and glycine with tetrahydrofolate (THF) serving as the one-carbon carrier. This reaction serves as the major source of one-carbon groups required for the biosynthesis of purines, thymidylate, methionine, and other important biomolecules. Also exhibits THF-independent aldolase activity toward beta-hydroxyamino acids, producing glycine and aldehydes, via a retro-aldol mechanism. The protein is Serine hydroxymethyltransferase of Koribacter versatilis (strain Ellin345).